The chain runs to 396 residues: GTPase Obg (396 aa).

In terms of domain architecture, Obg spans 1–159; that stretch reads MKFVDEASIY…RTLKLEMKVL (159 aa). The interval 120–146 is disordered; that stretch reads GGHHGLGNTRFKSSTNRAPRQTTKGTV. Over residues 129 to 144 the composition is skewed to polar residues; it reads RFKSSTNRAPRQTTKG. An OBG-type G domain is found at 160-333; the sequence is ADVGLLGLPN…LCLDLMTALD (174 aa). GTP is bound by residues 166–173, 191–195, 213–216, 283–286, and 314–316; these read GLPNAGKS, FTTLV, DIPG, NKTD, and SAI. Residues Ser-173 and Thr-193 each coordinate Mg(2+).

Belongs to the TRAFAC class OBG-HflX-like GTPase superfamily. OBG GTPase family. Monomer. Mg(2+) serves as cofactor.

It localises to the cytoplasm. Functionally, an essential GTPase which binds GTP, GDP and possibly (p)ppGpp with moderate affinity, with high nucleotide exchange rates and a fairly low GTP hydrolysis rate. Plays a role in control of the cell cycle, stress response, ribosome biogenesis and in those bacteria that undergo differentiation, in morphogenesis control. This chain is GTPase Obg, found in Marinomonas sp. (strain MWYL1).